The primary structure comprises 183 residues: Ubiquinol-cytochrome c reductase iron-sulfur subunit (183 aa).

A helical membrane pass occupies residues Leu-21–Ile-41. The 94-residue stretch at Ile-88–Leu-181 folds into the Rieske domain. [2Fe-2S] cluster is bound by residues Cys-121, His-123, Cys-145, and His-148. Cysteines 126 and 147 form a disulfide.

This sequence belongs to the Rieske iron-sulfur protein family. In terms of assembly, the main subunits of complex b-c1 are: cytochrome b, cytochrome c1 and the Rieske protein. Requires [2Fe-2S] cluster as cofactor.

The protein resides in the cell inner membrane. It carries out the reaction a quinol + 2 Fe(III)-[cytochrome c](out) = a quinone + 2 Fe(II)-[cytochrome c](out) + 2 H(+)(out). In terms of biological role, component of the ubiquinol-cytochrome c reductase complex (complex III or cytochrome b-c1 complex), which is a respiratory chain that generates an electrochemical potential coupled to ATP synthesis. The polypeptide is Ubiquinol-cytochrome c reductase iron-sulfur subunit (petA) (Rhodospirillum rubrum).